We begin with the raw amino-acid sequence, 134 residues long: uncharacterized protein (134 aa).

Positions 1 to 30 (MGTLQGAALRSRERPSWPQETHGHRERTEE) are disordered. Residues 10–30 (RSRERPSWPQETHGHRERTEE) show a composition bias toward basic and acidic residues.

This is an uncharacterized protein from Homo sapiens (Human).